Reading from the N-terminus, the 167-residue chain is Ribosome maturation factor RimM (167 aa).

In terms of domain architecture, PRC barrel spans 94 to 165 (EHEYYYSDII…TIKITPMEGL (72 aa)).

The protein belongs to the RimM family. As to quaternary structure, binds ribosomal protein uS19.

The protein resides in the cytoplasm. Its function is as follows. An accessory protein needed during the final step in the assembly of 30S ribosomal subunit, possibly for assembly of the head region. Essential for efficient processing of 16S rRNA. May be needed both before and after RbfA during the maturation of 16S rRNA. It has affinity for free ribosomal 30S subunits but not for 70S ribosomes. This is Ribosome maturation factor RimM from Staphylococcus epidermidis (strain ATCC 12228 / FDA PCI 1200).